We begin with the raw amino-acid sequence, 232 residues long: LexA repressor (232 aa).

Residues 26–46 (FDEMKDALDLRSKSGIHRLIT) constitute a DNA-binding region (H-T-H motif). Catalysis depends on for autocatalytic cleavage activity residues Ser153 and Lys191.

It belongs to the peptidase S24 family. Homodimer.

It catalyses the reaction Hydrolysis of Ala-|-Gly bond in repressor LexA.. In terms of biological role, represses a number of genes involved in the response to DNA damage (SOS response), including recA and lexA. In the presence of single-stranded DNA, RecA interacts with LexA causing an autocatalytic cleavage which disrupts the DNA-binding part of LexA, leading to derepression of the SOS regulon and eventually DNA repair. The polypeptide is LexA repressor (Bradyrhizobium sp. (strain BTAi1 / ATCC BAA-1182)).